The following is a 90-amino-acid chain: Small ribosomal subunit protein mS37 (90 aa).

The cysteines at positions 27 and 58 are disulfide-linked.

It belongs to the mitochondrion-specific ribosomal protein mS37 family. In terms of assembly, component of the mitochondrial small ribosomal subunit (mt-SSU). Mature N.crassa 74S mitochondrial ribosomes consist of a small (37S) and a large (54S) subunit. The 37S small subunit contains a 16S ribosomal RNA (16S mt-rRNA) and 32 different proteins. The 54S large subunit contains a 23S rRNA (23S mt-rRNA) and 42 different proteins.

The protein localises to the mitochondrion. Component of the mitochondrial ribosome (mitoribosome), a dedicated translation machinery responsible for the synthesis of mitochondrial genome-encoded proteins, including at least some of the essential transmembrane subunits of the mitochondrial respiratory chain. The mitoribosomes are attached to the mitochondrial inner membrane and translation products are cotranslationally integrated into the membrane. The sequence is that of Small ribosomal subunit protein mS37 (mrp10) from Neurospora crassa (strain ATCC 24698 / 74-OR23-1A / CBS 708.71 / DSM 1257 / FGSC 987).